The sequence spans 287 residues: uncharacterized protein (287 aa).

The next 10 membrane-spanning stretches (helical) occupy residues Thr4–Ala24, Phe36–Phe56, Leu66–Leu86, Ser93–Leu113, Val122–Gly142, Leu148–Ala168, Val179–Thr199, Val208–Phe228, Gly237–Ile259, and Val264–Ala286. 2 consecutive EamA domains span residues Leu16–Leu139 and Val158–Arg284.

It belongs to the EamA transporter family.

The protein localises to the cell membrane. This is an uncharacterized protein from Bacillus subtilis (strain 168).